The sequence spans 181 residues: CASP-like protein 1F2 (181 aa).

At 1-18 (MADIETKSSQNQPLKTQN) the chain is on the cytoplasmic side. A helical transmembrane segment spans residues 19–39 (IFIGAQIFLRIVVIAASFAST). Residues 40–70 (WLMLTNKQTIDIGGFVLDANYSYSPEFKFLS) lie on the Extracellular side of the membrane. Residue asparagine 59 is glycosylated (N-linked (GlcNAc...) asparagine). The helical transmembrane segment at 71 to 91 (YANIVVGAFSFVSLLFLVLVG) threads the bilayer. Over 92–100 (RRSSNPTYY) the chain is Cytoplasmic. The chain crosses the membrane as a helical span at residues 101-121 (FILFLHDLALMSLVLGGCAAA). Over 122–150 (TVIGSLGKYGNSHTGWMQICDHFGKFCKR) the chain is Extracellular. The helical transmembrane segment at 151–171 (ATTSVAFSYFSLVCLLILTIT) threads the bilayer. At 172-181 (SASKSRQIQV) the chain is on the cytoplasmic side.

It belongs to the Casparian strip membrane proteins (CASP) family. As to quaternary structure, homodimer and heterodimers.

The protein localises to the cell membrane. The protein is CASP-like protein 1F2 of Populus trichocarpa (Western balsam poplar).